The chain runs to 133 residues: Small ribosomal subunit protein uS15 (133 aa).

It belongs to the universal ribosomal protein uS15 family. Part of the 30S ribosomal subunit.

In Methanosphaera stadtmanae (strain ATCC 43021 / DSM 3091 / JCM 11832 / MCB-3), this protein is Small ribosomal subunit protein uS15.